The following is a 1038-amino-acid chain: MANKLRKSNAIEWATATGTVPLLERSCCHSEDAALEPQASKTSHREQAPILRHLSQLSHLLIIAGLLIVCLAGVTEGRRHAPLMFEESDTGRRSNRPAVTECQFGKVLRELGSTWYADLGPPFGVMYCIKCECVAIPKKRRIVARVQCRNIKNECPPAKCDDPISLPGKCCKTCPGDRNDTDVALDVPVPNEEEERNMKHYAALLTGRTSYFLKGEEMKSMYTTYNPQNVVATARFLFHKKNLYYSFYTSSRIGRPRAIQFVDDAGVILEEHQLETTLAGTLSVYQNATGKICGVWRRVPRDYKRILRDDRLHVVLLWGNKQQAELALAGKVAKYTALQTELFSSLLEAPLPDGKTDPQLAGAGGTAIVSTSSGAASSMHLTLVFNGVFGAEEYADAALSVKIELAERKEVIFDEIPRVRKPSAEINVLELSSPISIQNLRLMSRGKLLLTVESKKYPHLRIQGHIVTRASCEIFQTLLAPHSAESSTKSSGLAWVYLNTDGSLAYNIETEHVNTRDRPNISLIEEQGKRKAKLEDLTPSFNFNQAIGSVEKLGPKVLESLYAGELGVNVATEHETSLIRGRLVPRPVADARDSAEPILLKRQEHTDAQNPHAVGMAWMSIDNECNLHYEVTLNGVPAQDLQLYLEEKPIEAIGAPVTRKLLEEFNGSYLEGFFLSMPSAELIKLEMSVCYLEVHSKHSKQLLLRGKLKSTKVPGHCFPVYTDNNVPVPGDHNDNHLVNGETKCFHSGRFYNESEQWRSAQDSCQMCACLRGQSSCEVIKCPALKCKSTEQLLQRDGECCPSCVPKKEAADYSAQSSPATNATDLLQQRRGCRLGEQFHPAGASWHPFLPPNGFDTCTTCSCDPLTLEIRCPRLVCPPLQCSEKLAYRPDKKACCKICPEGKQSSSNGHKTTPNNPNVLQDQAMQRSPSHSAEEVLANGGCKVVNKVYENGQEWHPILMSHGEQKCIKCRCKDSKVNCDRKRCSRSTCQQQTRVTSKRRLFEKPDAAAPAIDECCSTQCRRSRRHHKRQPHHQQRSSS.

The Cytoplasmic portion of the chain corresponds to 1–53; the sequence is MANKLRKSNAIEWATATGTVPLLERSCCHSEDAALEPQASKTSHREQAPILRH. A helical; Signal-anchor for type II membrane protein membrane pass occupies residues 54-74; it reads LSQLSHLLIIAGLLIVCLAGV. Over 75 to 1038 the chain is Extracellular; sequence TEGRRHAPLM…QPHHQQRSSS (964 aa). The 76-residue stretch at 100–175 folds into the VWFC 1 domain; sequence TECQFGKVLR…LPGKCCKTCP (76 aa). Residues Asn-179 and Asn-287 are each glycosylated (N-linked (GlcNAc...) asparagine). CHRD domains are found at residues 197-337, 339-471, 474-588, and 592-713; these read NMKH…KYTA, QTEL…TRAS, IFQT…PRPV, and RDSA…STKV. 4 N-linked (GlcNAc...) asparagine glycosylation sites follow: Asn-520, Asn-666, Asn-752, and Asn-821. In terms of domain architecture, VWFC 2 spans 742-804; that stretch reads TKCFHSGRFY…RDGECCPSCV (63 aa). VWFC domains follow at residues 830–899 and 939–1020; these read RGCR…KICP and GGCK…TQCR.

The protein belongs to the chordin family. In terms of assembly, component of a complex composed of dpp, sog and tsg. Interacts with palmitoyltransferase Hip14. Palmitoylated, probably by Hip14. Post-translationally, cleaved by metalloproteases tok and tld. Cleavage by tok during pupal development contributes to specification of the posterior crossvein in the wing. Abuts the dorsal dpp-expressing cells in a lateral stripe 14-16 cells wide. Later in embryogenesis it is expressed in neuroectoderm and in the endoderm spaced along the anterior-posterior axis of the developing gut.

It is found in the golgi apparatus membrane. It localises to the cell membrane. The protein localises to the secreted. In terms of biological role, putative negative growth factor. Antagonist of dpp, a protein involved in patterning the dorsal region and in the development of the neuroectoderm; dpp inhibition is enhanced by tsg. Required for establishment of a narrow stripe of peak levels of BMP signaling in the dorsal midline of early embryos, that will give rise to the amnioserosa. During pupal development, plays a role in specification of the posterior crossvein in the wing. Exhibits both agonist and antagonist activities towards BMP signaling during pupal wing patterning. This chain is Dorsal-ventral patterning protein Sog (sog), found in Drosophila melanogaster (Fruit fly).